Here is a 307-residue protein sequence, read N- to C-terminus: Small ribosomal subunit biogenesis GTPase RsgA (307 aa).

In terms of domain architecture, CP-type G spans 85–242 (RQDAWKTKLI…LIDSPGLQEF (158 aa)). GTP is bound by residues 135–138 (NKAD) and 184–192 (GQSGMGKST). Zn(2+) contacts are provided by Cys-266, Cys-271, His-273, and Cys-279.

Belongs to the TRAFAC class YlqF/YawG GTPase family. RsgA subfamily. Monomer. Associates with 30S ribosomal subunit, binds 16S rRNA. It depends on Zn(2+) as a cofactor.

It is found in the cytoplasm. One of several proteins that assist in the late maturation steps of the functional core of the 30S ribosomal subunit. Helps release RbfA from mature subunits. May play a role in the assembly of ribosomal proteins into the subunit. Circularly permuted GTPase that catalyzes slow GTP hydrolysis, GTPase activity is stimulated by the 30S ribosomal subunit. The chain is Small ribosomal subunit biogenesis GTPase RsgA from Neisseria meningitidis serogroup C (strain 053442).